Here is a 433-residue protein sequence, read N- to C-terminus: Transcriptional enhancer factor TEF-5 (433 aa).

Positions M1 to P12 are enriched in polar residues. Residues M1–W35 form a disordered region. Basic and acidic residues predominate over residues E14–D28. The segment at residues D28–G104 is a DNA-binding region (TEA). The tract at residues G171 to D433 is transcriptional activation.

High levels in cardiac muscle, low in skeletal muscle. Intermediate levels in gizzard and lung, low levels in kidney.

The protein localises to the nucleus. Transcription factor which plays a key role in the Hippo signaling pathway, a pathway involved in organ size control and tumor suppression by restricting proliferation and promoting apoptosis. The core of this pathway is composed of a kinase cascade wherein MST1/MST2, in complex with its regulatory protein SAV1, phosphorylates and activates LATS1/2 in complex with its regulatory protein MOB1, which in turn phosphorylates and inactivates YAP1 oncoprotein and WWTR1/TAZ. The protein is Transcriptional enhancer factor TEF-5 (TEAD3) of Gallus gallus (Chicken).